Here is a 556-residue protein sequence, read N- to C-terminus: Jerky protein homolog (556 aa).

The region spanning Arg11 to Leu62 is the HTH psq-type domain. DNA-binding regions (H-T-H motif) lie at residues Arg38–His58 and Pro110–Arg142. The HTH CENPB-type domain occupies Gln77–Asp149. Residues Lys213 to Trp382 enclose the DDE-1 domain. Residue Ser414 is modified to Phosphoserine. Positions Ser439–Gly482 are disordered. Positions Lys467–Pro479 are enriched in basic and acidic residues.

It belongs to the tigger transposable element derived protein family. Expressed ubiquitously.

The protein localises to the nucleus. In terms of biological role, may bind DNA. The sequence is that of Jerky protein homolog from Homo sapiens (Human).